A 139-amino-acid chain; its full sequence is ATP synthase epsilon chain (139 aa).

The protein belongs to the ATPase epsilon chain family. In terms of assembly, F-type ATPases have 2 components, CF(1) - the catalytic core - and CF(0) - the membrane proton channel. CF(1) has five subunits: alpha(3), beta(3), gamma(1), delta(1), epsilon(1). CF(0) has three main subunits: a, b and c.

Its subcellular location is the cell inner membrane. Functionally, produces ATP from ADP in the presence of a proton gradient across the membrane. The chain is ATP synthase epsilon chain from Acinetobacter baumannii (strain AB307-0294).